A 474-amino-acid chain; its full sequence is Homocitrate synthase, mitochondrial (474 aa).

One can recognise a Pyruvate carboxyltransferase domain in the interval 67 to 320 (FQIIESTLRE…KSKYKLEKLK (254 aa)). Arg-75 provides a ligand contact to 2-oxoglutarate. A Mg(2+)-binding site is contributed by Glu-76. 2-oxoglutarate-binding residues include His-135, Arg-195, and Thr-229. His-256 and His-258 together coordinate Mg(2+). Catalysis depends on His-353, which acts as the Proton acceptor.

This sequence belongs to the alpha-IPM synthase/homocitrate synthase family. Homocitrate synthase LYS20/LYS21 subfamily. Requires Mg(2+) as cofactor. The cofactor is Mn(2+).

The protein resides in the mitochondrion. The catalysed reaction is acetyl-CoA + 2-oxoglutarate + H2O = (2R)-homocitrate + CoA + H(+). It functions in the pathway amino-acid biosynthesis; L-lysine biosynthesis via AAA pathway; L-alpha-aminoadipate from 2-oxoglutarate: step 1/5. Catalyzes the aldol-type condensation of 2-oxoglutarate with acetyl-CoA to yield homocitrate. Carries out the first step of the alpha-aminoadipate (AAA) lysine biosynthesis pathway. This chain is Homocitrate synthase, mitochondrial (lys1), found in Penicillium rubens (strain ATCC 28089 / DSM 1075 / NRRL 1951 / Wisconsin 54-1255) (Penicillium chrysogenum).